The sequence spans 756 residues: Catalase-peroxidase (756 aa).

The first 26 residues, 1–26 (MKGKTVNKQTLAALVSALLVFNPAVA), serve as a signal peptide directing secretion. The tryptophyl-tyrosyl-methioninium (Trp-Tyr) (with M-274) cross-link spans 126 to 248 (WHSAGTYRTL…LGATHMGLIY (123 aa)). Catalysis depends on histidine 127, which acts as the Proton acceptor. The segment at residues 248–274 (YVNPEGPKGVPDPLGSAKNIRTAFSRM) is a cross-link (tryptophyl-tyrosyl-methioninium (Tyr-Met) (with W-126)). Residue histidine 289 participates in heme b binding.

It belongs to the peroxidase family. Peroxidase/catalase subfamily. Homodimer or homotetramer. Requires heme b as cofactor. Post-translationally, formation of the three residue Trp-Tyr-Met cross-link is important for the catalase, but not the peroxidase activity of the enzyme.

It catalyses the reaction H2O2 + AH2 = A + 2 H2O. The enzyme catalyses 2 H2O2 = O2 + 2 H2O. In terms of biological role, bifunctional enzyme with both catalase and broad-spectrum peroxidase activity. In Shewanella loihica (strain ATCC BAA-1088 / PV-4), this protein is Catalase-peroxidase.